A 433-amino-acid chain; its full sequence is Mitochondrial inner membrane protein OXA1L (433 aa).

Over 1-108 (MARNLVCGRW…QCATEPSFTE (108 aa)) the chain is Mitochondrial intermembrane. The chain crosses the membrane as a helical span at residues 109–129 (LGLGSYTPVGLIQNLLEYIHV). The Mitochondrial matrix segment spans residues 130-134 (DLGLP). The helical transmembrane segment at 135–155 (WWGAIATCTVLARCLVFPLIV) threads the bilayer. At 156–207 (KGQREAAKIHNHMPEMQKFSARIREAKLAGDQAEFYKATIEMTRYQKKHDIK) the chain is on the mitochondrial intermembrane side. The chain crosses the membrane as a helical span at residues 208 to 228 (LLRPLILPLTQAPVFISFFIA). Over 229 to 255 (LREMANLPVPSLQTGGLWWFQDLTVSD) the chain is Mitochondrial matrix. A helical transmembrane segment spans residues 256 to 276 (PIYVLPLVVTATMWCVLELGA). The Mitochondrial intermembrane portion of the chain corresponds to 277–293 (ETGVQSNDLQFMRNIIR). Residues 294-314 (VMPLVVLPVTIHFPSAVFMYW) traverse the membrane as a helical segment. At 315–433 (LSSNVFSLCQ…AKKPWQDTLG (119 aa)) the chain is on the mitochondrial matrix side. Position 359 is a phosphoserine (serine 359). Threonine 395 and threonine 397 each carry phosphothreonine. A disordered region spans residues 397–433 (THNPLLQHDPSHPPKAPNSNNSSIKANAKKPWQDTLG). Residues 413–426 (PNSNNSSIKANAKK) are compositionally biased toward low complexity.

The protein belongs to the OXA1/ALB3/YidC family. In terms of assembly, monomer; predominantly monomeric at low salt concentrations. Homooligomer; predominantly homooligomeric at high salt concentrations. Associates with the mitochondrial ribosome. Associates preferentially as a dimer with the large ribosomal subunit 39S of the mitochondrial ribosome. Interacts with OXA1L; promoting cotranslational quality control in mitochondria.

It is found in the mitochondrion inner membrane. Mitochondrial membrane insertase that mediates the cotranslational insertion of integral membrane proteins into the mitochondrial inner membrane. Essential for the activity and assembly of cytochrome oxidase. Required for the correct biogenesis of ATP synthase and complex I in mitochondria. The sequence is that of Mitochondrial inner membrane protein OXA1L (Oxa1l) from Mus musculus (Mouse).